Here is a 644-residue protein sequence, read N- to C-terminus: Threonine--tRNA ligase (644 aa).

In terms of domain architecture, TGS spans 1–61; that stretch reads MVAITLPDGS…VADAKVEIVT (61 aa). A catalytic region spans residues 242–533; it reads DHRKIGKALN…LIENYAGWMP (292 aa). 3 residues coordinate Zn(2+): Cys-333, His-384, and His-510.

The protein belongs to the class-II aminoacyl-tRNA synthetase family. As to quaternary structure, homodimer. Requires Zn(2+) as cofactor.

It is found in the cytoplasm. It carries out the reaction tRNA(Thr) + L-threonine + ATP = L-threonyl-tRNA(Thr) + AMP + diphosphate + H(+). Its function is as follows. Catalyzes the attachment of threonine to tRNA(Thr) in a two-step reaction: L-threonine is first activated by ATP to form Thr-AMP and then transferred to the acceptor end of tRNA(Thr). Also edits incorrectly charged L-seryl-tRNA(Thr). This chain is Threonine--tRNA ligase, found in Psychrobacter arcticus (strain DSM 17307 / VKM B-2377 / 273-4).